A 78-amino-acid polypeptide reads, in one-letter code: UPF0349 protein BLi03401/BL03152 (78 aa).

This sequence belongs to the UPF0349 family.

The chain is UPF0349 protein BLi03401/BL03152 from Bacillus licheniformis (strain ATCC 14580 / DSM 13 / JCM 2505 / CCUG 7422 / NBRC 12200 / NCIMB 9375 / NCTC 10341 / NRRL NRS-1264 / Gibson 46).